Consider the following 171-residue polypeptide: UPF0763 protein KHP_0657 (171 aa).

This sequence belongs to the UPF0763 family.

The polypeptide is UPF0763 protein KHP_0657 (Helicobacter pylori (strain 51)).